Consider the following 695-residue polypeptide: Protein ACTIVITY OF BC1 COMPLEX KINASE 7, chloroplastic (695 aa).

The Protein kinase domain maps to 259-589 (EFEEQPIAAA…VQEIRKQADD (331 aa)). Residues 265 to 273 (IAAASLGQV) and K287 contribute to the ATP site. The active-site Proton acceptor is the D421. Helical transmembrane passes span 633–653 (TILQ…NIGV) and 659–679 (GSQL…LLVL).

The protein belongs to the protein kinase superfamily. ADCK protein kinase family. In terms of tissue distribution, mostly expressed in leaves and flowers, and, to a lower extent, in roots.

Its subcellular location is the plastid. It localises to the chloroplast thylakoid membrane. The protein resides in the chloroplast. The protein localises to the plastoglobule. It carries out the reaction L-seryl-[protein] + ATP = O-phospho-L-seryl-[protein] + ADP + H(+). The enzyme catalyses L-threonyl-[protein] + ATP = O-phospho-L-threonyl-[protein] + ADP + H(+). Involved in resistance to oxidative stress. Influences responses to reactive oxygen species (ROS) production. Regulates plastoglobules formation in thylakoids. Together with OSA1, regulates iron distribution within the chloroplast and mediates the oxidative stress response. Together with ABC1K8, influences chloroplast lipid synthesis/accumulation and modulates chloroplast membrane composition in response to stress. The chain is Protein ACTIVITY OF BC1 COMPLEX KINASE 7, chloroplastic from Arabidopsis thaliana (Mouse-ear cress).